A 491-amino-acid chain; its full sequence is Glutamyl-tRNA(Gln) amidotransferase subunit A (491 aa).

Catalysis depends on charge relay system residues lysine 80 and serine 155. Residue serine 179 is the Acyl-ester intermediate of the active site.

It belongs to the amidase family. GatA subfamily. Heterotrimer of A, B and C subunits.

It catalyses the reaction L-glutamyl-tRNA(Gln) + L-glutamine + ATP + H2O = L-glutaminyl-tRNA(Gln) + L-glutamate + ADP + phosphate + H(+). Functionally, allows the formation of correctly charged Gln-tRNA(Gln) through the transamidation of misacylated Glu-tRNA(Gln) in organisms which lack glutaminyl-tRNA synthetase. The reaction takes place in the presence of glutamine and ATP through an activated gamma-phospho-Glu-tRNA(Gln). In Salinispora tropica (strain ATCC BAA-916 / DSM 44818 / JCM 13857 / NBRC 105044 / CNB-440), this protein is Glutamyl-tRNA(Gln) amidotransferase subunit A.